The following is a 531-amino-acid chain: Large neutral amino acids transporter small subunit 2 (531 aa).

A disordered region spans residues M1–G29. Residues M1 to S43 lie on the Cytoplasmic side of the membrane. The segment covering Q7 to S21 has biased composition (polar residues). Residues S18, S21, S27, and S28 each carry the phosphoserine modification. The chain crosses the membrane as a helical span at residues A44–V64. I52 serves as a coordination point for L-leucine. Topologically, residues L65–G72 are extracellular. A helical transmembrane segment spans residues L73–E94. The Cytoplasmic portion of the chain corresponds to L95 to G115. The helical transmembrane segment at L116–P148 threads the bilayer. N133 is a binding site for L-tryptophan. The Extracellular portion of the chain corresponds to L149–P156. Residues E157 to S177 form a helical membrane-spanning segment. The Cytoplasmic segment spans residues S178–R180. A helical transmembrane segment spans residues W181–C209. Residues K210–D229 lie on the Extracellular side of the membrane. A helical transmembrane segment spans residues I230–N251. Position 245 (G245) interacts with L-leucine. Over Y252–L264 the chain is Cytoplasmic. The helical transmembrane segment at P265–Y286 threads the bilayer. Residues V287 to G311 are Extracellular-facing. The chain crosses the membrane as a helical span at residues V312–S337. Residues R338–P363 are Cytoplasmic-facing. The chain crosses the membrane as a helical span at residues I364–S381. Topologically, residues D382–T385 are extracellular. Residues L386 to V407 form a helical membrane-spanning segment. N394 contacts L-tryptophan. The Cytoplasmic segment spans residues L408–S422. 2 helical membrane-spanning segments follow: residues L423–P445 and V446–G465. Over V466–P531 the chain is Cytoplasmic. A disordered region spans residues N499–P531. S527 is modified (phosphoserine).

Belongs to the amino acid-polyamine-organocation (APC) superfamily. L-type amino acid transporter (LAT) (TC 2.A.3.8) family. As to quaternary structure, disulfide-linked heterodimer composed of the catalytic light chain subunit SLC7A8 and the heavy chain subunit SLC3A2. SLC3A2 acts as a chaperone for correct plasma membrane trafficking and stabilization of SLC7A8 and modulates the substrate affinity and specificity of SLC7A8. ICAM-1 associates with the heterodimer SLC3A2/SLC7A8; facilitates leucine uptake. Strongly expressed in kidney and small intestine. Moderately present in placenta, ovary and brain. Expressed in the inner ear.

It localises to the cell membrane. Its subcellular location is the basolateral cell membrane. It catalyses the reaction L-histidine(in) + L-phenylalanine(out) = L-histidine(out) + L-phenylalanine(in). It carries out the reaction L-tryptophan(in) + L-phenylalanine(out) = L-tryptophan(out) + L-phenylalanine(in). The catalysed reaction is L-isoleucine(in) + L-phenylalanine(out) = L-isoleucine(out) + L-phenylalanine(in). The enzyme catalyses L-valine(in) + L-phenylalanine(out) = L-valine(out) + L-phenylalanine(in). It catalyses the reaction L-leucine(in) + L-phenylalanine(out) = L-leucine(out) + L-phenylalanine(in). It carries out the reaction L-glutamine(in) + L-phenylalanine(out) = L-glutamine(out) + L-phenylalanine(in). The catalysed reaction is L-cysteine(in) + L-phenylalanine(out) = L-cysteine(out) + L-phenylalanine(in). The enzyme catalyses L-phenylalanine(out) + L-methionine(in) = L-phenylalanine(in) + L-methionine(out). It catalyses the reaction L-leucine(out) + L-methionine(in) = L-leucine(in) + L-methionine(out). It carries out the reaction L-cysteine(out) + L-methionine(in) = L-cysteine(in) + L-methionine(out). The catalysed reaction is S-methylmercury-L-cysteine(out) + L-methionine(in) = S-methylmercury-L-cysteine(in) + L-methionine(out). The enzyme catalyses S-methylmercury-L-cysteine(in) + L-leucine(out) = S-methylmercury-L-cysteine(out) + L-leucine(in). It catalyses the reaction S-methylmercury-L-cysteine(in) + L-phenylalanine(out) = S-methylmercury-L-cysteine(out) + L-phenylalanine(in). It carries out the reaction L-phenylalanine(out) + L-serine(in) = L-phenylalanine(in) + L-serine(out). The catalysed reaction is L-phenylalanine(out) + glycine(in) = L-phenylalanine(in) + glycine(out). The enzyme catalyses L-phenylalanine(out) + L-alanine(in) = L-phenylalanine(in) + L-alanine(out). It catalyses the reaction L-tryptophan(in) = L-tryptophan(out). It carries out the reaction 3,3',5-triiodo-L-thyronine(out) = 3,3',5-triiodo-L-thyronine(in). The catalysed reaction is 3,3'-diiodo-L-thyronine(out) = 3,3'-diiodo-L-thyronine(in). The enzyme catalyses L-dopa(out) + L-phenylalanine(in) = L-dopa(in) + L-phenylalanine(out). Associates with SLC3A2 to form a functional heterodimeric complex that translocates small and large neutral amino acids with broad specificity and a stoichiometry of 1:1. Functions as amino acid antiporter mediating the influx of extracellular essential amino acids mainly in exchange with the efflux of highly concentrated intracellular amino acids. Has relatively symmetrical selectivities but strongly asymmetrical substrate affinities at both the intracellular and extracellular sides of the transporter. This asymmetry allows SLC7A8 to regulate intracellular amino acid pools (mM concentrations) by exchange with external amino acids (uM concentration range), equilibrating the relative concentrations of different amino acids across the plasma membrane instead of mediating their net uptake. May play an essential role in the reabsorption of neutral amino acids from the epithelial cells to the bloodstream in the kidney. Involved in the uptake of methylmercury (MeHg) when administered as the L-cysteine or D,L-homocysteine complexes, and hence plays a role in metal ion homeostasis and toxicity. Involved in the cellular activity of small molecular weight nitrosothiols, via the stereoselective transport of L-nitrosocysteine (L-CNSO) across the transmembrane. Imports the thyroid hormone diiodothyronine (T2) and to a smaller extent triiodothyronine (T3) but not rT 3 or thyroxine (T4). Mediates the uptake of L-DOPA. May participate in auditory function. This chain is Large neutral amino acids transporter small subunit 2 (Slc7a8), found in Mus musculus (Mouse).